A 143-amino-acid chain; its full sequence is Large ribosomal subunit protein uL11 (143 aa).

It belongs to the universal ribosomal protein uL11 family. In terms of assembly, part of the ribosomal stalk of the 50S ribosomal subunit. Interacts with L10 and the large rRNA to form the base of the stalk. L10 forms an elongated spine to which L12 dimers bind in a sequential fashion forming a multimeric L10(L12)X complex. In terms of processing, one or more lysine residues are methylated.

Functionally, forms part of the ribosomal stalk which helps the ribosome interact with GTP-bound translation factors. The protein is Large ribosomal subunit protein uL11 of Pseudomonas syringae pv. tomato (strain ATCC BAA-871 / DC3000).